Here is a 125-residue protein sequence, read N- to C-terminus: Small ribosomal subunit protein eS8 (125 aa).

Positions 1–34 (MQWQGRSVRKSTGGRYSPSRGKRRREIGSAPAET) are disordered.

The protein belongs to the eukaryotic ribosomal protein eS8 family. As to quaternary structure, part of the 30S ribosomal subunit.

In Methanospirillum hungatei JF-1 (strain ATCC 27890 / DSM 864 / NBRC 100397 / JF-1), this protein is Small ribosomal subunit protein eS8.